The sequence spans 161 residues: Transcription elongation factor GreB (161 aa).

The protein belongs to the GreA/GreB family. GreB subfamily.

Functionally, necessary for efficient RNA polymerase transcription elongation past template-encoded arresting sites. The arresting sites in DNA have the property of trapping a certain fraction of elongating RNA polymerases that pass through, resulting in locked ternary complexes. Cleavage of the nascent transcript by cleavage factors such as GreA or GreB allows the resumption of elongation from the new 3'terminus. GreB releases sequences of up to 9 nucleotides in length. The chain is Transcription elongation factor GreB from Vibrio cholerae serotype O1 (strain ATCC 39315 / El Tor Inaba N16961).